The chain runs to 164 residues: Putative L,D-transpeptidase YkuD (164 aa).

One can recognise a LysM domain in the interval 2 to 45 (LTYQVKQGDTLNSIAADFRISTAALLQANPSLQAGLTAGQSIVI). In terms of domain architecture, L,D-TPase catalytic spans 56-163 (YHIAVSIGAK…VPNGTRVTIN (108 aa)). The active-site Proton donor/acceptor is His-123. The active-site Nucleophile is the Cys-139.

This sequence belongs to the YkuD family. As to quaternary structure, monomer.

It is found in the spore wall. Its pathway is cell wall biogenesis; peptidoglycan biosynthesis. In terms of biological role, probable enzyme that may play an important role in cell wall biology. The polypeptide is Putative L,D-transpeptidase YkuD (ykuD) (Bacillus subtilis (strain 168)).